We begin with the raw amino-acid sequence, 476 residues long: Aspartyl/glutamyl-tRNA(Asn/Gln) amidotransferase subunit B (476 aa).

This sequence belongs to the GatB/GatE family. GatB subfamily. Heterotrimer of A, B and C subunits.

The enzyme catalyses L-glutamyl-tRNA(Gln) + L-glutamine + ATP + H2O = L-glutaminyl-tRNA(Gln) + L-glutamate + ADP + phosphate + H(+). It carries out the reaction L-aspartyl-tRNA(Asn) + L-glutamine + ATP + H2O = L-asparaginyl-tRNA(Asn) + L-glutamate + ADP + phosphate + 2 H(+). Allows the formation of correctly charged Asn-tRNA(Asn) or Gln-tRNA(Gln) through the transamidation of misacylated Asp-tRNA(Asn) or Glu-tRNA(Gln) in organisms which lack either or both of asparaginyl-tRNA or glutaminyl-tRNA synthetases. The reaction takes place in the presence of glutamine and ATP through an activated phospho-Asp-tRNA(Asn) or phospho-Glu-tRNA(Gln). The polypeptide is Aspartyl/glutamyl-tRNA(Asn/Gln) amidotransferase subunit B (Albidiferax ferrireducens (strain ATCC BAA-621 / DSM 15236 / T118) (Rhodoferax ferrireducens)).